The following is a 295-amino-acid chain: Elongation factor Ts (295 aa).

The involved in Mg(2+) ion dislocation from EF-Tu stretch occupies residues 79 to 82 (TDFV).

Belongs to the EF-Ts family.

It localises to the cytoplasm. Functionally, associates with the EF-Tu.GDP complex and induces the exchange of GDP to GTP. It remains bound to the aminoacyl-tRNA.EF-Tu.GTP complex up to the GTP hydrolysis stage on the ribosome. This is Elongation factor Ts from Mycoplasma mycoides subsp. mycoides SC (strain CCUG 32753 / NCTC 10114 / PG1).